Here is a 418-residue protein sequence, read N- to C-terminus: Glutamyl-tRNA(Gln) amidotransferase subunit D (418 aa).

An Asparaginase/glutaminase domain is found at 81-407; that stretch reads PDVKIISTGG…EEAKEMVKKS (327 aa). Active-site residues include threonine 91, threonine 166, aspartate 167, and lysine 243.

It belongs to the asparaginase 1 family. GatD subfamily. In terms of assembly, heterodimer of GatD and GatE.

The enzyme catalyses L-glutamyl-tRNA(Gln) + L-glutamine + ATP + H2O = L-glutaminyl-tRNA(Gln) + L-glutamate + ADP + phosphate + H(+). Allows the formation of correctly charged Gln-tRNA(Gln) through the transamidation of misacylated Glu-tRNA(Gln) in organisms which lack glutaminyl-tRNA synthetase. The reaction takes place in the presence of glutamine and ATP through an activated gamma-phospho-Glu-tRNA(Gln). The GatDE system is specific for glutamate and does not act on aspartate. This chain is Glutamyl-tRNA(Gln) amidotransferase subunit D, found in Archaeoglobus fulgidus (strain ATCC 49558 / DSM 4304 / JCM 9628 / NBRC 100126 / VC-16).